The sequence spans 257 residues: Asnovolin H dehydrogenase nvfC (257 aa).

The chain crosses the membrane as a helical span at residues 7–26 (YVLIITGSASGIGLATATIA). Position 11 (Ile-11) interacts with NADP(+). N-linked (GlcNAc...) asparagine glycans are attached at residues Asn-57, Asn-92, and Asn-110. 4 residues coordinate NADP(+): Arg-119, Tyr-151, Lys-155, and Val-184. Catalysis depends on Tyr-151, which acts as the Proton donor. The active-site Lowers pKa of active site Tyr is the Lys-155.

Belongs to the short-chain dehydrogenases/reductases (SDR) family.

It localises to the membrane. The catalysed reaction is asnovolin H + A = chermesin D + AH2. It functions in the pathway secondary metabolite biosynthesis; terpenoid biosynthesis. In terms of biological role, short chain dehydrogenase; part of the gene cluster that mediates the biosynthesis of novofumigatonin, a heavily oxygenated meroterpenoid containing a unique orthoester moiety. The first step of the pathway is the synthesis of 3,5-dimethylorsellinic acid (DMOA) by the polyketide synthase nvfA via condensation of one acetyl-CoA starter unit with 3 malonyl-CoA units and 2 methylations. DMOA is then converted to farnesyl-DMOA by the farnesyltransferase nvfB. Epoxydation by FAD-dependent monooxygenase nvfK, followed by a protonation-initiated cyclization catalyzed by the terpene cyclase nvfL leads to the production of asnavolin H. The short chain dehydrogenase nvfC then as a 3-OH dehydrogenase of asnovolin H to yield chemesin D. There are two branches to synthesize asnovolin A from chemesin D. In one branch, chemesin D undergoes Baeyer-Villiger oxidation by nvfH, methylation by nvfJ, and enoyl reduction by the nvfM D enoylreductase that reduces the double bond between C-5'and C-6', to form respectively asnovolin I, asnovolin K, and asnovolin A. In the other branch, the methylation precedes the Baeyer-Villiger oxidation and the enoyl reduction to yield asnovolin A via the asnovolin J intermediate. Asnovolin A is further converted to fumigatonoid A by the Fe(II)/2-oxoglutarate-dependent dioxygenase nvfI that catalyzes an endoperoxidation reaction. The alpha/beta hydrolase nvfD then acts as an epimerase that converts fumigatonoid A to its C-5' epimer, which then undergoes spontaneous or nvfD-catalyzed lactonization. The following step utilizes the ketoreductase nvfG to produce fumigatonoid B. The dioxygenase nvfE further converts fumigatonoid B into fumigatonoid C. Finally the Fe(II)/2-oxoglutarate-dependent dioxygenase nvfF catalyzes two rounds of oxidation to transform fumigatonoid C into the end product, novofumigatonin A. The protein is Asnovolin H dehydrogenase nvfC of Aspergillus novofumigatus (strain IBT 16806).